The sequence spans 286 residues: Structural protein p32K (286 aa).

The propeptide at M1–G12 is removed in mature form. A disordered region spans residues M1 to N41. The segment covering Y14–P36 has biased composition (basic residues).

This sequence belongs to the atadenoviridae p32K protein family.

The protein localises to the virion. The chain is Structural protein p32K from Ovine adenovirus D serotype 7 (isolate OAV287) (OAdV-7).